A 155-amino-acid chain; its full sequence is Small ribosomal subunit protein uS7c (155 aa).

This sequence belongs to the universal ribosomal protein uS7 family. In terms of assembly, part of the 30S ribosomal subunit.

It localises to the plastid. The protein localises to the chloroplast. Functionally, one of the primary rRNA binding proteins, it binds directly to 16S rRNA where it nucleates assembly of the head domain of the 30S subunit. This Lactoris fernandeziana protein is Small ribosomal subunit protein uS7c (rps7).